The sequence spans 491 residues: uncharacterized protein (491 aa).

One can recognise a PE domain in the interval 1-92 (MSFVIASPEA…GGGSYASAEI (92 aa)). Disordered regions lie at residues 114-156 (PLVG…AGGA), 376-400 (AGGSGGSGAPGSVSSGGVGGAGNPG), and 419-491 (AGQG…GPDG). Over residues 128–145 (GQPGGDGGILWGNGGNGG) the composition is skewed to gly residues. Residues 432–480 (GGPGGVGGHGGTAILFGDGGAGGAGAAGGPGTPDGAAGPGGSGGTGGLL) show a composition bias toward gly residues.

The protein belongs to the mycobacterial PE family. PGRS subfamily.

This is an uncharacterized protein from Mycobacterium bovis (strain ATCC BAA-935 / AF2122/97).